The primary structure comprises 340 residues: Protein arginine N-methyltransferase 1 (340 aa).

The 296-residue stretch at 16–311 (KDYYFDSYSH…TCKPAEGNHR (296 aa)) folds into the SAM-dependent MTase PRMT-type domain. At Tyr19 the chain carries Phosphotyrosine. Positions 29, 38, 62, 84, and 113 each coordinate S-adenosyl-L-methionine. Residues Glu128 and Glu137 contribute to the active site. Ser176 is modified (phosphoserine).

Belongs to the class I-like SAM-binding methyltransferase superfamily. Protein arginine N-methyltransferase family. In terms of assembly, interacts with pab2.

It localises to the nucleus. It catalyses the reaction L-arginyl-[protein] + S-adenosyl-L-methionine = N(omega)-methyl-L-arginyl-[protein] + S-adenosyl-L-homocysteine + H(+). The catalysed reaction is L-arginyl-[protein] + 2 S-adenosyl-L-methionine = N(omega),N(omega)-dimethyl-L-arginyl-[protein] + 2 S-adenosyl-L-homocysteine + 2 H(+). Its function is as follows. S-adenosyl-L-methionine-dependent protein-arginine N-methyltransferase that catalyzes both the mono- and asymmetric (type I) dimethylation of the guanidino nitrogens of arginine residues in target proteins. Asymmetrically dimethylates the polyadenylate-binding protein pab2, modulating pab2 oligomerization. The sequence is that of Protein arginine N-methyltransferase 1 from Schizosaccharomyces pombe (strain 972 / ATCC 24843) (Fission yeast).